The chain runs to 257 residues: Hydroxyethylthiazole kinase (257 aa).

Methionine 49 contributes to the substrate binding site. 2 residues coordinate ATP: arginine 124 and threonine 170. Glycine 197 is a substrate binding site.

This sequence belongs to the Thz kinase family. The cofactor is Mg(2+).

It catalyses the reaction 5-(2-hydroxyethyl)-4-methylthiazole + ATP = 4-methyl-5-(2-phosphooxyethyl)-thiazole + ADP + H(+). The protein operates within cofactor biosynthesis; thiamine diphosphate biosynthesis; 4-methyl-5-(2-phosphoethyl)-thiazole from 5-(2-hydroxyethyl)-4-methylthiazole: step 1/1. In terms of biological role, catalyzes the phosphorylation of the hydroxyl group of 4-methyl-5-beta-hydroxyethylthiazole (THZ). This Klebsiella pneumoniae (strain 342) protein is Hydroxyethylthiazole kinase.